A 344-amino-acid polypeptide reads, in one-letter code: Arginine N-succinyltransferase (344 aa).

Leu125 is a binding site for succinyl-CoA. The active-site Proton donor is the His229.

Belongs to the arginine N-succinyltransferase family.

The catalysed reaction is succinyl-CoA + L-arginine = N(2)-succinyl-L-arginine + CoA + H(+). It participates in amino-acid degradation; L-arginine degradation via AST pathway; L-glutamate and succinate from L-arginine: step 1/5. Catalyzes the transfer of succinyl-CoA to arginine to produce N(2)-succinylarginine. This chain is Arginine N-succinyltransferase, found in Salmonella dublin (strain CT_02021853).